We begin with the raw amino-acid sequence, 190 residues long: Large ribosomal subunit protein bL9 (190 aa).

Belongs to the bacterial ribosomal protein bL9 family.

Its function is as follows. Binds to the 23S rRNA. The sequence is that of Large ribosomal subunit protein bL9 from Methylorubrum populi (strain ATCC BAA-705 / NCIMB 13946 / BJ001) (Methylobacterium populi).